Consider the following 290-residue polypeptide: MLRNKIDKIRLLFRKDRESYSCFYRILGFYPRNIRLYEQALLHKSTAVRSEKGRPLNNERLEFLGDAILDAIVGDIVYQHFEGKREGFLTNTRSKIVQRETLNKLAVEIGLDKLIKYSTRSSSHNSYMYGNAFEAFIGAIYLDRGYECCKQFMERRIIEPYIDLDKLSRKEVNFKSKLIEWSQKNKMEVSFELIEQSLDKENNPVFQTEVRIEGILGGSGTGYSKKESQQNAAQMTLKKIKGDPEFMASVQEAKTQNNVPAEDTTPESEMSLTAENQQIDEIISTEEISV.

The RNase III domain maps to 20-145 (YSCFYRILGF…FIGAIYLDRG (126 aa)). Residue glutamate 62 participates in Mg(2+) binding. The active site involves aspartate 66. Residues asparagine 131 and glutamate 134 each contribute to the Mg(2+) site. The active site involves glutamate 134. Residues 173 to 242 (NFKSKLIEWS…AQMTLKKIKG (70 aa)) enclose the DRBM domain. The tract at residues 254 to 290 (KTQNNVPAEDTTPESEMSLTAENQQIDEIISTEEISV) is disordered. Residues 267-279 (ESEMSLTAENQQI) are compositionally biased toward polar residues.

The protein belongs to the ribonuclease III family. As to quaternary structure, homodimer. It depends on Mg(2+) as a cofactor.

The protein resides in the cytoplasm. The catalysed reaction is Endonucleolytic cleavage to 5'-phosphomonoester.. Its function is as follows. Digests double-stranded RNA. Involved in the processing of primary rRNA transcript to yield the immediate precursors to the large and small rRNAs (23S and 16S). Processes some mRNAs, and tRNAs when they are encoded in the rRNA operon. Processes pre-crRNA and tracrRNA of type II CRISPR loci if present in the organism. The sequence is that of Ribonuclease 3 from Bacteroides fragilis (strain YCH46).